Reading from the N-terminus, the 886-residue chain is Coatomer subunit gamma (886 aa).

HEAT repeat units lie at residues 66 to 103 (VEAT…SSDE), 288 to 325 (RELT…THPM), 327 to 359 (VTNC…TGNE), 360 to 397 (SSVE…KFPL), and 472 to 509 (SDPS…MVES). A disordered region spans residues 592–613 (SQPLAEKKAQGKKPTGLGAPPA).

Belongs to the COPG family. As to quaternary structure, oligomeric complex that consists of at least the alpha, beta, beta', gamma, delta, epsilon and zeta subunits.

The protein resides in the cytoplasm. It localises to the golgi apparatus membrane. The protein localises to the cytoplasmic vesicle. Its subcellular location is the COPI-coated vesicle membrane. The coatomer is a cytosolic protein complex that binds to dilysine motifs and reversibly associates with Golgi non-clathrin-coated vesicles, which further mediate biosynthetic protein transport from the ER, via the Golgi up to the trans Golgi network. Coatomer complex is required for budding from Golgi membranes, and is essential for the retrograde Golgi-to-ER transport of dilysine-tagged proteins. The polypeptide is Coatomer subunit gamma (Arabidopsis thaliana (Mouse-ear cress)).